We begin with the raw amino-acid sequence, 395 residues long: 8-amino-7-oxononanoate synthase (395 aa).

A substrate-binding site is contributed by R24. 111 to 112 (GF) contributes to the pyridoxal 5'-phosphate binding site. Position 136 (H136) interacts with substrate. Pyridoxal 5'-phosphate is bound by residues S184, 209 to 212 (DDAH), and 240 to 243 (TLSK). K243 is modified (N6-(pyridoxal phosphate)lysine). A substrate-binding site is contributed by T357.

The protein belongs to the class-II pyridoxal-phosphate-dependent aminotransferase family. BioF subfamily. Homodimer. Pyridoxal 5'-phosphate is required as a cofactor.

It catalyses the reaction 6-carboxyhexanoyl-[ACP] + L-alanine + H(+) = (8S)-8-amino-7-oxononanoate + holo-[ACP] + CO2. The protein operates within cofactor biosynthesis; biotin biosynthesis. Its function is as follows. Catalyzes the decarboxylative condensation of pimeloyl-[acyl-carrier protein] and L-alanine to produce 8-amino-7-oxononanoate (AON), [acyl-carrier protein], and carbon dioxide. The chain is 8-amino-7-oxononanoate synthase from Alkaliphilus oremlandii (strain OhILAs) (Clostridium oremlandii (strain OhILAs)).